Reading from the N-terminus, the 236-residue chain is Biosynthetic peptidoglycan transglycosylase (236 aa).

A helical membrane pass occupies residues 12-31; that stretch reads ALLWFAAGSVLVVLVLRWVP.

It belongs to the glycosyltransferase 51 family.

The protein localises to the cell inner membrane. The enzyme catalyses [GlcNAc-(1-&gt;4)-Mur2Ac(oyl-L-Ala-gamma-D-Glu-L-Lys-D-Ala-D-Ala)](n)-di-trans,octa-cis-undecaprenyl diphosphate + beta-D-GlcNAc-(1-&gt;4)-Mur2Ac(oyl-L-Ala-gamma-D-Glu-L-Lys-D-Ala-D-Ala)-di-trans,octa-cis-undecaprenyl diphosphate = [GlcNAc-(1-&gt;4)-Mur2Ac(oyl-L-Ala-gamma-D-Glu-L-Lys-D-Ala-D-Ala)](n+1)-di-trans,octa-cis-undecaprenyl diphosphate + di-trans,octa-cis-undecaprenyl diphosphate + H(+). It participates in cell wall biogenesis; peptidoglycan biosynthesis. In terms of biological role, peptidoglycan polymerase that catalyzes glycan chain elongation from lipid-linked precursors. The chain is Biosynthetic peptidoglycan transglycosylase from Pseudomonas savastanoi pv. phaseolicola (strain 1448A / Race 6) (Pseudomonas syringae pv. phaseolicola (strain 1448A / Race 6)).